A 206-amino-acid polypeptide reads, in one-letter code: Small ribosomal subunit protein uS4 (206 aa).

The interval 15-46 (MGENIWGRPKSPVNKREYGPGQHGQRRKNKLS) is disordered. The S4 RNA-binding domain maps to 94–154 (RRLDAIVYRA…EKSRQLALVL (61 aa)).

It belongs to the universal ribosomal protein uS4 family. In terms of assembly, part of the 30S ribosomal subunit. Contacts protein S5. The interaction surface between S4 and S5 is involved in control of translational fidelity.

In terms of biological role, one of the primary rRNA binding proteins, it binds directly to 16S rRNA where it nucleates assembly of the body of the 30S subunit. With S5 and S12 plays an important role in translational accuracy. This is Small ribosomal subunit protein uS4 from Cereibacter sphaeroides (strain ATCC 17029 / ATH 2.4.9) (Rhodobacter sphaeroides).